The following is a 1021-amino-acid chain: Ankyrin repeat- and BTB/POZ domain-containing protein 3-A (1021 aa).

Residues 160 to 180 form a helical membrane-spanning segment; the sequence is MVLSWTISVNCITAALSALSL. 4 ANK repeats span residues 515-544, 561-590, 599-628, and 642-671; these read QGMT…DINS, RQGT…NVEG, YTET…DPLI, and GEMN…KDKG. The BTB domain occupies 836–902; it reads SDVTFLVEGK…LYCGGTESLH (67 aa).

The protein localises to the membrane. This is Ankyrin repeat- and BTB/POZ domain-containing protein 3-A (abtb3a) from Danio rerio (Zebrafish).